We begin with the raw amino-acid sequence, 239 residues long: NADH-quinone oxidoreductase subunit I 1 (239 aa).

4Fe-4S ferredoxin-type domains follow at residues 81 to 111 and 123 to 152; these read LVPREDGKPRCVACYMCATICPAQCIYIEAA and AKFVIDELRCIVCGFCVEACPKDAIRMDSG. Residues Cys-91, Cys-94, Cys-97, Cys-101, Cys-132, Cys-135, Cys-138, and Cys-142 each contribute to the [4Fe-4S] cluster site.

Belongs to the complex I 23 kDa subunit family. NDH-1 is composed of 14 different subunits. Subunits NuoA, H, J, K, L, M, N constitute the membrane sector of the complex. Requires [4Fe-4S] cluster as cofactor.

The protein localises to the cell inner membrane. It catalyses the reaction a quinone + NADH + 5 H(+)(in) = a quinol + NAD(+) + 4 H(+)(out). Its function is as follows. NDH-1 shuttles electrons from NADH, via FMN and iron-sulfur (Fe-S) centers, to quinones in the respiratory chain. The immediate electron acceptor for the enzyme in this species is believed to be ubiquinone. Couples the redox reaction to proton translocation (for every two electrons transferred, four hydrogen ions are translocated across the cytoplasmic membrane), and thus conserves the redox energy in a proton gradient. This Anaeromyxobacter dehalogenans (strain 2CP-C) protein is NADH-quinone oxidoreductase subunit I 1.